Reading from the N-terminus, the 213-residue chain is Nucleoside triphosphate pyrophosphatase (213 aa).

Catalysis depends on Asp77, which acts as the Proton acceptor.

It belongs to the Maf family. It depends on a divalent metal cation as a cofactor.

Its subcellular location is the cytoplasm. The catalysed reaction is a ribonucleoside 5'-triphosphate + H2O = a ribonucleoside 5'-phosphate + diphosphate + H(+). It carries out the reaction a 2'-deoxyribonucleoside 5'-triphosphate + H2O = a 2'-deoxyribonucleoside 5'-phosphate + diphosphate + H(+). Nucleoside triphosphate pyrophosphatase. May have a dual role in cell division arrest and in preventing the incorporation of modified nucleotides into cellular nucleic acids. This Cutibacterium acnes (strain DSM 16379 / KPA171202) (Propionibacterium acnes) protein is Nucleoside triphosphate pyrophosphatase.